An 85-amino-acid chain; its full sequence is Small integral membrane protein 2 (85 aa).

Residues 21–43 (GHAISILFGFWTSFICDTYIVLA) form a helical membrane-spanning segment. Positions 51-85 (SPDVSASSDEPYARIQQSRRQCHAEEDQSQVPEAG) are disordered.

The protein resides in the membrane. The chain is Small integral membrane protein 2 (SMIM2) from Homo sapiens (Human).